Reading from the N-terminus, the 596-residue chain is Aspartic proteinase yapsin-7 (596 aa).

Residues 1–25 form the signal peptide; the sequence is MTCLILWYLWLISTFQLEFATASTA. N-linked (GlcNAc...) asparagine glycosylation is found at Asn26 and Asn59. At 26 to 575 the chain is on the lumenal side; the sequence is NTTTTAKSGT…SPYTFNKDPA (550 aa). In terms of domain architecture, Peptidase A1 spans 56-440; the sequence is YYVNSTFGTP…DLEDNTIAIA (385 aa). The active site involves Asp74. Asn106, Asn131, Asn140, Asn143, Asn148, Asn175, and Asn308 each carry an N-linked (GlcNAc...) asparagine glycan. Residue Asp321 is part of the active site. N-linked (GlcNAc...) asparagine glycosylation is found at Asn391, Asn455, Asn478, Asn484, Asn549, and Asn552. Residues 576-596 traverse the membrane as a helical segment; the sequence is GHVTRIASLLLLSIFSILIVL.

Belongs to the peptidase A1 family.

The protein localises to the cytoplasm. Its subcellular location is the endoplasmic reticulum membrane. The polypeptide is Aspartic proteinase yapsin-7 (YPS7) (Saccharomyces cerevisiae (strain ATCC 204508 / S288c) (Baker's yeast)).